We begin with the raw amino-acid sequence, 335 residues long: MSLPIKLGYKASAEQFNPRELVEYTVAAERHGFDSVVVSDHFQPWRYTGGHAPWALAWLGAVGERTSRVQIGTSVLTPTFRYNPAIIAQAFATFGMLYPGRVFLGVGTGEALNEQAVGLKEWPEFKERFARLRESVELMRKLWTEERVNYEGEYYRTVDATVYDKPSEPIPVYVSAGGAVVARYAGRAGDGFICTSGKGAELYTETLLPAVQEGADKVGRDAGGIDKLIEIKLSYDPDPWLALNNTRFWSPLSLSAEQKHSLSDPKQMEEAADALPMEQIAKRWIVASDPDEVVEKIKFYTDLGLNHLVFHAPGHDQLRFLEVFERDLAPRLRSL.

Aspartate 40 serves as a coordination point for coenzyme F420-(gamma-Glu)n. Histidine 41 functions as the Proton donor in the catalytic mechanism. Residues threonine 77 and 108–109 contribute to the coenzyme F420-(gamma-Glu)n site; that span reads TG. Glutamate 110 functions as the Proton acceptor in the catalytic mechanism. Coenzyme F420-(gamma-Glu)n-binding positions include asparagine 113, 177–178, and 180–181; these read GG and VV. Substrate is bound by residues threonine 195, lysine 198, lysine 259, and arginine 283.

Belongs to the F420-dependent glucose-6-phosphate dehydrogenase family. In terms of assembly, homodimer.

It catalyses the reaction oxidized coenzyme F420-(gamma-L-Glu)(n) + D-glucose 6-phosphate + H(+) = 6-phospho-D-glucono-1,5-lactone + reduced coenzyme F420-(gamma-L-Glu)(n). Its function is as follows. Catalyzes the coenzyme F420-dependent oxidation of glucose 6-phosphate (G6P) to 6-phosphogluconolactone. This is F420-dependent glucose-6-phosphate dehydrogenase from Segniliparus rotundus (strain ATCC BAA-972 / CDC 1076 / CIP 108378 / DSM 44985 / JCM 13578).